The primary structure comprises 829 residues: Leucine--tRNA ligase (829 aa).

The short motif at 40–51 (PYPSGAGLHVGH) is the 'HIGH' region element. Positions 609–613 (KMSKS) match the 'KMSKS' region motif. Residue Lys-612 coordinates ATP.

Belongs to the class-I aminoacyl-tRNA synthetase family.

It localises to the cytoplasm. It carries out the reaction tRNA(Leu) + L-leucine + ATP = L-leucyl-tRNA(Leu) + AMP + diphosphate. This is Leucine--tRNA ligase from Lactococcus lactis subsp. lactis (strain IL1403) (Streptococcus lactis).